Reading from the N-terminus, the 355-residue chain is Aminopeptidase N (355 aa).

Substrate is bound by residues Glu156 and 290 to 294 (GAMEN). His326 is a binding site for Zn(2+). Catalysis depends on Glu327, which acts as the Proton acceptor. Residues His330 and Glu349 each contribute to the Zn(2+) site. Substrate is bound at residue Glu349.

It belongs to the peptidase M1 family. Zn(2+) serves as cofactor.

Its subcellular location is the cytoplasm. It catalyses the reaction Release of an N-terminal amino acid, Xaa-|-Yaa- from a peptide, amide or arylamide. Xaa is preferably Ala, but may be most amino acids including Pro (slow action). When a terminal hydrophobic residue is followed by a prolyl residue, the two may be released as an intact Xaa-Pro dipeptide.. Functionally, aminopeptidase N is involved in the degradation of intracellular peptides generated by protein breakdown during normal growth as well as in response to nutrient starvation. In Acetobacter pasteurianus (Acetobacter turbidans), this protein is Aminopeptidase N (pepN).